The primary structure comprises 400 residues: 3-phenylpropionate/cinnamic acid dioxygenase ferredoxin--NAD(+) reductase component (400 aa).

5–36 (TIIIVGGGQAAAMAAASLRQQGFTGELHLFSD) is an FAD binding site. Residue 146-174 (SVVIVGAGTIGLELAASATQRRCKVTVIE) participates in NAD(+) binding.

It belongs to the bacterial ring-hydroxylating dioxygenase ferredoxin reductase family. This dioxygenase system consists of four proteins: the two subunits of the hydroxylase component (HcaE and HcaF), a ferredoxin (HcaC) and a ferredoxin reductase (HcaD). It depends on FAD as a cofactor.

The enzyme catalyses 2 reduced [2Fe-2S]-[ferredoxin] + NAD(+) + H(+) = 2 oxidized [2Fe-2S]-[ferredoxin] + NADH. It functions in the pathway aromatic compound metabolism; 3-phenylpropanoate degradation. Its function is as follows. Part of the multicomponent 3-phenylpropionate dioxygenase, that converts 3-phenylpropionic acid (PP) and cinnamic acid (CI) into 3-phenylpropionate-dihydrodiol (PP-dihydrodiol) and cinnamic acid-dihydrodiol (CI-dihydrodiol), respectively. The polypeptide is 3-phenylpropionate/cinnamic acid dioxygenase ferredoxin--NAD(+) reductase component (Shigella sonnei (strain Ss046)).